We begin with the raw amino-acid sequence, 106 residues long: UPF0642 protein YBL028C (106 aa).

Polar residues predominate over residues 1 to 12; that stretch reads MAKSLRASSHLN. Disordered regions lie at residues 1-21 and 52-106; these read MAKS…RRGV and KEEQ…FTRF. Residues 62-72 show a composition bias toward basic and acidic residues; sequence DEKKSNEEAPR. Over residues 83–106 the composition is skewed to basic residues; that stretch reads GRHHTYKKAKLMKQSKKKTSFTRF.

The protein belongs to the UPF0642 family.

The sequence is that of UPF0642 protein YBL028C from Saccharomyces cerevisiae (strain ATCC 204508 / S288c) (Baker's yeast).